The primary structure comprises 50 residues: Large ribosomal subunit protein eL39 (50 aa).

Belongs to the eukaryotic ribosomal protein eL39 family.

The protein is Large ribosomal subunit protein eL39 of Methanosphaerula palustris (strain ATCC BAA-1556 / DSM 19958 / E1-9c).